The chain runs to 210 residues: tRNA (guanine-N(7)-)-methyltransferase (210 aa).

Glu36, Glu61, Asp90, and Asp112 together coordinate S-adenosyl-L-methionine. Residue Asp112 is part of the active site. Substrate is bound by residues Lys116, Asp148, and 188–191 (TEYE).

This sequence belongs to the class I-like SAM-binding methyltransferase superfamily. TrmB family.

It carries out the reaction guanosine(46) in tRNA + S-adenosyl-L-methionine = N(7)-methylguanosine(46) in tRNA + S-adenosyl-L-homocysteine. Its pathway is tRNA modification; N(7)-methylguanine-tRNA biosynthesis. Functionally, catalyzes the formation of N(7)-methylguanine at position 46 (m7G46) in tRNA. This is tRNA (guanine-N(7)-)-methyltransferase from Mycoplasma genitalium (strain ATCC 33530 / DSM 19775 / NCTC 10195 / G37) (Mycoplasmoides genitalium).